We begin with the raw amino-acid sequence, 407 residues long: Imidazolonepropionase (407 aa).

2 residues coordinate Fe(3+): His74 and His76. Positions 74 and 76 each coordinate Zn(2+). 3 residues coordinate 4-imidazolone-5-propanoate: Arg83, Tyr146, and His179. Tyr146 is a binding site for N-formimidoyl-L-glutamate. His244 contacts Fe(3+). His244 serves as a coordination point for Zn(2+). A 4-imidazolone-5-propanoate-binding site is contributed by Gln247. Residue Asp319 participates in Fe(3+) binding. Asp319 contributes to the Zn(2+) binding site. 2 residues coordinate N-formimidoyl-L-glutamate: Asn321 and Gly323. Thr324 is a binding site for 4-imidazolone-5-propanoate.

This sequence belongs to the metallo-dependent hydrolases superfamily. HutI family. Requires Zn(2+) as cofactor. The cofactor is Fe(3+).

The protein resides in the cytoplasm. It carries out the reaction 4-imidazolone-5-propanoate + H2O = N-formimidoyl-L-glutamate. It participates in amino-acid degradation; L-histidine degradation into L-glutamate; N-formimidoyl-L-glutamate from L-histidine: step 3/3. Functionally, catalyzes the hydrolytic cleavage of the carbon-nitrogen bond in imidazolone-5-propanoate to yield N-formimidoyl-L-glutamate. It is the third step in the universal histidine degradation pathway. The protein is Imidazolonepropionase of Salmonella agona (strain SL483).